The primary structure comprises 87 residues: Spermatid-specific protein S1 (87 aa).

The segment at 1–36 is disordered; sequence TKSRYRNRRSRPRRRYGRRMRKTRCRRKGRRISRRP.

It is found in the nucleus. The protein resides in the chromosome. Functionally, involved in nuclear basic protein transition: histones are replaced by spermatid specific proteins which are themselves replaced by protamines in late spermatids. The protein is Spermatid-specific protein S1 of Scyliorhinus canicula (Small-spotted catshark).